Consider the following 388-residue polypeptide: Chorismate synthase (388 aa).

NADP(+) contacts are provided by arginine 39 and arginine 45. FMN is bound by residues 130–132 (RSS), 251–252 (NA), glycine 296, 311–315 (KPIPT), and arginine 337.

It belongs to the chorismate synthase family. In terms of assembly, homotetramer. Requires FMNH2 as cofactor.

The enzyme catalyses 5-O-(1-carboxyvinyl)-3-phosphoshikimate = chorismate + phosphate. Its pathway is metabolic intermediate biosynthesis; chorismate biosynthesis; chorismate from D-erythrose 4-phosphate and phosphoenolpyruvate: step 7/7. Functionally, catalyzes the anti-1,4-elimination of the C-3 phosphate and the C-6 proR hydrogen from 5-enolpyruvylshikimate-3-phosphate (EPSP) to yield chorismate, which is the branch point compound that serves as the starting substrate for the three terminal pathways of aromatic amino acid biosynthesis. This reaction introduces a second double bond into the aromatic ring system. The polypeptide is Chorismate synthase (Streptococcus pyogenes serotype M1).